The primary structure comprises 129 residues: Large ribosomal subunit protein bL17 (129 aa).

It belongs to the bacterial ribosomal protein bL17 family. In terms of assembly, part of the 50S ribosomal subunit. Contacts protein L32.

This chain is Large ribosomal subunit protein bL17, found in Polynucleobacter asymbioticus (strain DSM 18221 / CIP 109841 / QLW-P1DMWA-1) (Polynucleobacter necessarius subsp. asymbioticus).